The following is a 156-amino-acid chain: ATP synthase subunit b (156 aa).

A helical membrane pass occupies residues 7-27; the sequence is LFAQMVVFLILAWFTMKFVWP.

It belongs to the ATPase B chain family. In terms of assembly, F-type ATPases have 2 components, F(1) - the catalytic core - and F(0) - the membrane proton channel. F(1) has five subunits: alpha(3), beta(3), gamma(1), delta(1), epsilon(1). F(0) has three main subunits: a(1), b(2) and c(10-14). The alpha and beta chains form an alternating ring which encloses part of the gamma chain. F(1) is attached to F(0) by a central stalk formed by the gamma and epsilon chains, while a peripheral stalk is formed by the delta and b chains.

The protein resides in the cell inner membrane. Functionally, f(1)F(0) ATP synthase produces ATP from ADP in the presence of a proton or sodium gradient. F-type ATPases consist of two structural domains, F(1) containing the extramembraneous catalytic core and F(0) containing the membrane proton channel, linked together by a central stalk and a peripheral stalk. During catalysis, ATP synthesis in the catalytic domain of F(1) is coupled via a rotary mechanism of the central stalk subunits to proton translocation. Component of the F(0) channel, it forms part of the peripheral stalk, linking F(1) to F(0). This chain is ATP synthase subunit b, found in Paraburkholderia phymatum (strain DSM 17167 / CIP 108236 / LMG 21445 / STM815) (Burkholderia phymatum).